The primary structure comprises 632 residues: tRNA-guanine(15) transglycosylase (632 aa).

Residue aspartate 86 is the Nucleophile of the active site. Residues aspartate 121 and glycine 186 each coordinate substrate. Positions 553–628 constitute a PUA domain; it reads AMRVTVSKES…IAVKVHEGRD (76 aa).

The protein belongs to the archaeosine tRNA-ribosyltransferase family. It depends on Zn(2+) as a cofactor.

The catalysed reaction is guanosine(15) in tRNA + 7-cyano-7-deazaguanine = 7-cyano-7-carbaguanosine(15) in tRNA + guanine. The protein operates within tRNA modification; archaeosine-tRNA biosynthesis. Exchanges the guanine residue with 7-cyano-7-deazaguanine (preQ0) at position 15 in the dihydrouridine loop (D-loop) of archaeal tRNAs. This is tRNA-guanine(15) transglycosylase from Thermoplasma acidophilum (strain ATCC 25905 / DSM 1728 / JCM 9062 / NBRC 15155 / AMRC-C165).